The primary structure comprises 96 residues: Citrate lyase acyl carrier protein (96 aa).

Residue Ser-14 is modified to O-(phosphoribosyl dephospho-coenzyme A)serine.

Belongs to the CitD family. As to quaternary structure, oligomer with a subunit composition of (alpha,beta,gamma)6.

Its subcellular location is the cytoplasm. Its function is as follows. Covalent carrier of the coenzyme of citrate lyase. In Pectobacterium carotovorum subsp. carotovorum (strain PC1), this protein is Citrate lyase acyl carrier protein.